We begin with the raw amino-acid sequence, 227 residues long: MPARSPEPLPDHSSVCSPGCADLPILAASGLGFSRAGRVVFSGIDLALGPGDLLQVLGANGSGKTSLLRVLSGLVAPDEGELHWRGRPVRAGDPSLLQALAYVGHANGIDPELSPVENLRFAARLAGVAATPDNVQAALAAFGLERVMHAPARSLSQGLRRRAALARLALARRELWLLDEPVTSLDADAAARFQAQLDDHLRAGGMAIVATHALLPGARTLRLDARS.

The ABC transporter domain maps to 26-227 (LAASGLGFSR…ARTLRLDARS (202 aa)). 58 to 65 (GANGSGKT) is an ATP binding site.

Belongs to the ABC transporter superfamily. CcmA exporter (TC 3.A.1.107) family. In terms of assembly, the complex is composed of two ATP-binding proteins (CcmA) and two transmembrane proteins (CcmB).

It localises to the cell inner membrane. It carries out the reaction heme b(in) + ATP + H2O = heme b(out) + ADP + phosphate + H(+). Part of the ABC transporter complex CcmAB involved in the biogenesis of c-type cytochromes; once thought to export heme, this seems not to be the case, but its exact role is uncertain. Responsible for energy coupling to the transport system. The polypeptide is Cytochrome c biogenesis ATP-binding export protein CcmA (Cupriavidus necator (strain ATCC 17699 / DSM 428 / KCTC 22496 / NCIMB 10442 / H16 / Stanier 337) (Ralstonia eutropha)).